We begin with the raw amino-acid sequence, 581 residues long: Proline--tRNA ligase (581 aa).

The protein belongs to the class-II aminoacyl-tRNA synthetase family. ProS type 1 subfamily. Homodimer.

Its subcellular location is the cytoplasm. It catalyses the reaction tRNA(Pro) + L-proline + ATP = L-prolyl-tRNA(Pro) + AMP + diphosphate. Catalyzes the attachment of proline to tRNA(Pro) in a two-step reaction: proline is first activated by ATP to form Pro-AMP and then transferred to the acceptor end of tRNA(Pro). As ProRS can inadvertently accommodate and process non-cognate amino acids such as alanine and cysteine, to avoid such errors it has two additional distinct editing activities against alanine. One activity is designated as 'pretransfer' editing and involves the tRNA(Pro)-independent hydrolysis of activated Ala-AMP. The other activity is designated 'posttransfer' editing and involves deacylation of mischarged Ala-tRNA(Pro). The misacylated Cys-tRNA(Pro) is not edited by ProRS. The chain is Proline--tRNA ligase from Methylibium petroleiphilum (strain ATCC BAA-1232 / LMG 22953 / PM1).